Here is a 48-residue protein sequence, read N- to C-terminus: Delta-stichotoxin-Hmg4b (48 aa).

3 disulfide bridges follow: Cys-3–Cys-43, Cys-5–Cys-33, and Cys-26–Cys-44.

Belongs to the sea anemone sodium channel inhibitory toxin family. Type II subfamily.

The protein localises to the secreted. The protein resides in the nematocyst. Its function is as follows. Binds specifically to voltage-gated sodium channels (Nav), thereby delaying their inactivation during signal transduction. Its toxicity is greater than that of RpII (AC P01534). The sequence is that of Delta-stichotoxin-Hmg4b from Heteractis magnifica (Magnificent sea anemone).